The sequence spans 490 residues: Ribosome biogenesis protein YTM1 (490 aa).

Residues 1–22 are disordered; that stretch reads MDGLEDGPLDASTATSQKPQRQ. The interval 23–104 is ubiquitin-like (UBL) domain; that stretch reads VRLKLTSRHE…ETTLDVEYVR (82 aa). WD repeat units lie at residues 116–168, 175–213, 224–263, 298–338, 340–379, 385–425, and 449–487; these read LHDD…IALS, GHTA…DGFS, GHKG…NPAA, SHTA…LVDT, TASH…TTVS, GHTN…TDKD, and GEGV…PNGG. The disordered stretch occupies residues 255–286; the sequence is TRKSENPAAPESLLPSNTSRSSKRRKLNSSVS.

It belongs to the WD repeat WDR12/YTM1 family. As to quaternary structure, component of the NOP7 complex, composed of ERB1, NOP7 and YTM1. The complex is held together by ERB1, which interacts with NOP7 via its N-terminal domain and with YTM1 via a high-affinity interaction between the seven-bladed beta-propeller domains of the 2 proteins. The NOP7 complex associates with the 66S pre-ribosome. Interacts (via UBL domain) with MDN1 (via VWFA/MIDAS domain).

The protein localises to the nucleus. It is found in the nucleolus. It localises to the nucleoplasm. Functionally, component of the NOP7 complex, which is required for maturation of the 25S and 5.8S ribosomal RNAs and formation of the 60S ribosome. This chain is Ribosome biogenesis protein YTM1, found in Ajellomyces capsulatus (strain NAm1 / WU24) (Darling's disease fungus).